A 278-amino-acid chain; its full sequence is Probable endonuclease 4 (278 aa).

9 residues coordinate Zn(2+): histidine 69, histidine 109, glutamate 145, aspartate 179, histidine 182, histidine 214, aspartate 227, histidine 229, and glutamate 259.

The protein belongs to the AP endonuclease 2 family. It depends on Zn(2+) as a cofactor.

The enzyme catalyses Endonucleolytic cleavage to 5'-phosphooligonucleotide end-products.. Endonuclease IV plays a role in DNA repair. It cleaves phosphodiester bonds at apurinic or apyrimidinic (AP) sites, generating a 3'-hydroxyl group and a 5'-terminal sugar phosphate. The protein is Probable endonuclease 4 of Bacteroides fragilis (strain ATCC 25285 / DSM 2151 / CCUG 4856 / JCM 11019 / LMG 10263 / NCTC 9343 / Onslow / VPI 2553 / EN-2).